Here is a 632-residue protein sequence, read N- to C-terminus: Extracellular metalloproteinase 1 (632 aa).

Positions 1–19 (MHGLLLAAGLISLPLHVLA) are cleaved as a signal peptide. Residues 20–246 (HPQPSSTSLA…VVDYVAHATF (227 aa)) constitute a propeptide that is removed on maturation. N-linked (GlcNAc...) asparagine glycosylation is present at N284. Residue T430 coordinates Zn(2+). Residue H431 is part of the active site. S434 contributes to the Zn(2+) binding site. N-linked (GlcNAc...) asparagine glycosylation is present at N591.

It belongs to the peptidase M36 family. Requires Zn(2+) as cofactor.

The protein resides in the secreted. Its activity is regulated as follows. PMSF, soybean trypsin inhibitor (SBTI) and chymostatin strongly inhibit the proteinase. Functionally, secreted metalloproteinase probably acting as a virulence factor. In Arthroderma otae (Microsporum canis), this protein is Extracellular metalloproteinase 1 (MEP1).